A 410-amino-acid polypeptide reads, in one-letter code: Peptidase T (410 aa).

His-79 lines the Zn(2+) pocket. Asp-81 is a catalytic residue. Zn(2+) is bound at residue Asp-142. Glu-176 functions as the Proton acceptor in the catalytic mechanism. The Zn(2+) site is built by Glu-177, Asp-199, and His-381.

The protein belongs to the peptidase M20B family. Requires Zn(2+) as cofactor.

Its subcellular location is the cytoplasm. It carries out the reaction Release of the N-terminal residue from a tripeptide.. In terms of biological role, cleaves the N-terminal amino acid of tripeptides. The chain is Peptidase T from Listeria monocytogenes serotype 4b (strain CLIP80459).